Consider the following 269-residue polypeptide: UPF0328 protein ECU03_0020 (269 aa).

The protein belongs to the UPF0328 family.

In Encephalitozoon cuniculi (strain GB-M1) (Microsporidian parasite), this protein is UPF0328 protein ECU03_0020.